A 389-amino-acid chain; its full sequence is Chalcone synthase (389 aa).

Cysteine 164 is an active-site residue.

It belongs to the thiolase-like superfamily. Chalcone/stilbene synthases family.

It catalyses the reaction (E)-4-coumaroyl-CoA + 3 malonyl-CoA + 3 H(+) = 2',4,4',6'-tetrahydroxychalcone + 3 CO2 + 4 CoA. It functions in the pathway secondary metabolite biosynthesis; flavonoid biosynthesis. Its function is as follows. The primary product of this enzyme is 4,2',4',6'-tetrahydroxychalcone (also termed naringenin-chalcone or chalcone) which can under specific conditions spontaneously isomerize into naringenin. The protein is Chalcone synthase (CHS) of Catharanthus roseus (Madagascar periwinkle).